We begin with the raw amino-acid sequence, 132 residues long: Small ribosomal subunit protein uS8 (132 aa).

It belongs to the universal ribosomal protein uS8 family. As to quaternary structure, part of the 30S ribosomal subunit. Contacts proteins S5 and S12.

In terms of biological role, one of the primary rRNA binding proteins, it binds directly to 16S rRNA central domain where it helps coordinate assembly of the platform of the 30S subunit. In Maricaulis maris (strain MCS10) (Caulobacter maris), this protein is Small ribosomal subunit protein uS8.